The primary structure comprises 179 residues: uncharacterized protein (179 aa).

Residues 1 to 32 (MELQGAQEDLGISLSSPRRNHETRPGSKAKGR) are disordered.

This is an uncharacterized protein from Homo sapiens (Human).